The sequence spans 197 residues: Recombination protein RecR (197 aa).

The C4-type zinc finger occupies 55-70; sequence CVQCRDFTESEICTIC. The region spanning 78–173 is the Toprim domain; sequence QQLCVVESPA…RPSRLAQGMP (96 aa).

Belongs to the RecR family.

May play a role in DNA repair. It seems to be involved in an RecBC-independent recombinational process of DNA repair. It may act with RecF and RecO. The protein is Recombination protein RecR of Xanthomonas axonopodis pv. citri (strain 306).